We begin with the raw amino-acid sequence, 470 residues long: MASPEPLRGGDGARASREPHTEASFPLQESESPKEAKTFNPEATLSLEGTVNLEDILYLGASGDFEESFYEEEYEKPALTLFIDESRQPDEALGLEEPVRPEEMLSVEESVTPDEVQISEQPVEPAKSPTACEGEMVATEGSLPAQPIPNTEEDPLSVEDLERLEARFQQCVQAVSQLEEERDQLIHELVLLREPALQEVQQVHQDILAAYKLHAQAELERDGLREEIRTVKQKLFKVTKECVAYQYQLECRQQDVAQFADCREALTTRAAQLSEELTQLRDACQKQKEQLQQQLEAPPTQSDGHFLQESRRLSTQFENLMAESRQGLEEEYEPQLLRLLERKEAGTKALQDTQAEIQEMREALRPLEAEARQLQLQNRNLEDQITLVRQKRDEEVQQYREQLEEMEERQRQLRSGVQVQQQKNKEMERLRMSLAEELSTYKAMLPKSLEQADAPTSQAGGVEAQSPGTV.

Residues 1–43 (MASPEPLRGGDGARASREPHTEASFPLQESESPKEAKTFNPEA) form a disordered region. A head region spans residues 1 to 148 (MASPEPLRGG…TEGSLPAQPI (148 aa)). Ser-32 bears the Phosphoserine mark. The region spanning 157 to 452 (SVEDLERLEA…AMLPKSLEQA (296 aa)) is the IF rod domain. The tract at residues 158 to 192 (VEDLERLEARFQQCVQAVSQLEEERDQLIHELVLL) is coil 1A. The tract at residues 193–219 (REPALQEVQQVHQDILAAYKLHAQAEL) is linker 1. The segment at 220-297 (ERDGLREEIR…KEQLQQQLEA (78 aa)) is coil 1b. A linker 2 region spans residues 298-337 (PPTQSDGHFLQESRRLSTQFENLMAESRQGLEEEYEPQLL). Ser-314 bears the Phosphoserine mark. Positions 338 to 445 (RLLERKEAGT…EELSTYKAML (108 aa)) are coil 2. Residues 446 to 470 (PKSLEQADAPTSQAGGVEAQSPGTV) are disordered. The tract at residues 446–470 (PKSLEQADAPTSQAGGVEAQSPGTV) is tail.

This sequence belongs to the intermediate filament family. As to quaternary structure, may link the dystrophin-associated glycoprotein complex (DAPC) to intracellular desmin (DES) filaments. Interacts with DES and DTNA. As to expression, detected strongly in skeletal muscle and heart and weakly in lung (at protein level). Highly expressed in skeletal muscle and lung and weakly in lung and testis.

The protein localises to the cytoplasm. It is found in the perinuclear region. Functionally, atypical type III intermediate filament (IF) protein that may play a supportive role in the efficient coupling of mechanical stress between the myofibril and fiber exterior. May facilitate lateral force transmission during skeletal muscle contraction. Does not form homofilaments nor heterofilaments with other IF proteins. This chain is Syncoilin (Sync), found in Mus musculus (Mouse).